The following is a 174-amino-acid chain: ATP synthase subunit b (174 aa).

A helical membrane pass occupies residues 15–33 (NPGLVIWTLVTFSVVVFVL).

Belongs to the ATPase B chain family. F-type ATPases have 2 components, F(1) - the catalytic core - and F(0) - the membrane proton channel. F(1) has five subunits: alpha(3), beta(3), gamma(1), delta(1), epsilon(1). F(0) has three main subunits: a(1), b(2) and c(10-14). The alpha and beta chains form an alternating ring which encloses part of the gamma chain. F(1) is attached to F(0) by a central stalk formed by the gamma and epsilon chains, while a peripheral stalk is formed by the delta and b chains.

Its subcellular location is the cell inner membrane. In terms of biological role, f(1)F(0) ATP synthase produces ATP from ADP in the presence of a proton or sodium gradient. F-type ATPases consist of two structural domains, F(1) containing the extramembraneous catalytic core and F(0) containing the membrane proton channel, linked together by a central stalk and a peripheral stalk. During catalysis, ATP synthesis in the catalytic domain of F(1) is coupled via a rotary mechanism of the central stalk subunits to proton translocation. Functionally, component of the F(0) channel, it forms part of the peripheral stalk, linking F(1) to F(0). In Leptospira biflexa serovar Patoc (strain Patoc 1 / Ames), this protein is ATP synthase subunit b.